We begin with the raw amino-acid sequence, 295 residues long: Protein gurken (295 aa).

The first 26 residues, 1–26 (MMQIPFTRIFKVIFVLSTIVAVTDCC), serve as a signal peptide directing secretion. Over 27–247 (SSRILLLREH…TAQRKVRMAH (221 aa)) the chain is Extracellular. Disordered regions lie at residues 78 to 111 (EASA…SIAA) and 124 to 175 (TDTW…NDKE). A compositionally biased stretch (polar residues) spans 124–139 (TDTWLASESSTPITDS). Low complexity-rich tracts occupy residues 140–152 (ETVT…THTG) and 159–171 (SSSS…TPSP). One can recognise an EGF-like domain in the interval 179-224 (QMLPCSEAYNTSFCLNGGHCFQHPMVNNTVFHSCLCVNDYDGERCA). 3 cysteine pairs are disulfide-bonded: Cys-183–Cys-198, Cys-192–Cys-212, and Cys-214–Cys-223. 2 N-linked (GlcNAc...) asparagine glycosylation sites follow: Asn-188 and Asn-205. Residues 215–245 (VNDYDGERCAYKSWNGDYIYSPPTAQRKVRM) are interaction with cni. The chain crosses the membrane as a helical span at residues 248–268 (IVFSFPVLLMLSSLYVLFAAV). Topologically, residues 269 to 295 (FMLRNVPDYRRKQQQLHLHKQRFFVRC) are cytoplasmic.

In terms of assembly, interacts with cni. As to expression, expressed in nurse cells and oocyte up to oogenesis stage 7. Specifically accumulates in dorsal anterior corner of the oocyte during stages 9/10, at later stages expression is seen as an anterior ring. In stage 10 ovaries, it is concentrated between the oocyte nucleus and the adjacent oolemma. During vitellogenesis stage it can be detected at the oocyte surface, especially on the microvilli. It is also found at the microvilli covering the apical surface of the follicular epithelium and within follicle cells.

It is found in the cell membrane. Functionally, critical for defining the anterior-posterior and dorsal-ventral axes of the egg. May signal directly to dorsal follicle cells through the receptor torpedo (top). During oogenesis this signaling pathway instructs follicle cells to follow a dorsal pathway of development rather than the default ventral pathway. In Drosophila melanogaster (Fruit fly), this protein is Protein gurken (grk).